The chain runs to 202 residues: Urease accessory protein UreE (202 aa).

A compositionally biased stretch (basic and acidic residues) spans 171 to 188 (HHGHSHSHDHDHDHDHQH). A disordered region spans residues 171–202 (HHGHSHSHDHDHDHDHQHGPGCTHGHRGHDHH).

The protein belongs to the UreE family.

It localises to the cytoplasm. Functionally, involved in urease metallocenter assembly. Binds nickel. Probably functions as a nickel donor during metallocenter assembly. In Burkholderia ambifaria (strain ATCC BAA-244 / DSM 16087 / CCUG 44356 / LMG 19182 / AMMD) (Burkholderia cepacia (strain AMMD)), this protein is Urease accessory protein UreE.